The chain runs to 173 residues: Ribosome maturation factor RimP (173 aa).

The protein belongs to the RimP family.

The protein resides in the cytoplasm. Functionally, required for maturation of 30S ribosomal subunits. This chain is Ribosome maturation factor RimP, found in Chlorobium phaeobacteroides (strain DSM 266 / SMG 266 / 2430).